The sequence spans 821 residues: Zinc finger protein 41 (821 aa).

A disordered region spans residues 1–55 (MAANGDSPPWSPALAAEGRGSSCEVRRERTPEARIHSVKRYPDLSPGPKGRSSAD). The segment covering 24–35 (EVRRERTPEARI) has biased composition (basic and acidic residues). A KRAB domain is found at 69–140 (VSFEDVTVDF…EGEAPHQSCS (72 aa)). Residue K120 forms a Glycyl lysine isopeptide (Lys-Gly) (interchain with G-Cter in SUMO2) linkage. Residues 313–335 (YVCTECVMGFTQKSHLFEHQRIH) form a C2H2-type 1 zinc finger. The segment at 341–364 (RECDKSNKVFPQKPQVDVHPSVYT) adopts a C2H2-type 2; degenerate zinc-finger fold. 10 consecutive C2H2-type zinc fingers follow at residues 369 to 391 (YLCT…QKIH), 397 to 419 (YKCS…LRIH), 425 to 447 (YECS…QKTH), 453 to 475 (YECN…QRIH), 481 to 503 (YVCA…QRIH), 509 to 531 (YECS…QRIH), 537 to 559 (YICT…QKTH), 565 to 587 (YMCA…QKTH), 593 to 615 (YKCN…QKSH), and 621 to 643 (YECK…QRIH). Residue K647 forms a Glycyl lysine isopeptide (Lys-Gly) (interchain with G-Cter in SUMO2) linkage. C2H2-type zinc fingers lie at residues 649–671 (YVCP…HRIH), 677–699 (YECS…QKIH), 705–727 (NICA…QKIH), 733–755 (YECG…QKSH), 761–783 (YECS…QIIH), and 789–811 (YACT…QKMH).

Belongs to the krueppel C2H2-type zinc-finger protein family. In terms of tissue distribution, expressed in the heart, brain, placenta, lung, liver, skeletal muscle, kidney and pancreas.

The protein localises to the nucleus. Functionally, may be involved in transcriptional regulation. The chain is Zinc finger protein 41 (ZNF41) from Homo sapiens (Human).